Consider the following 3797-residue polypeptide: A-kinase anchor protein 9 (3797 aa).

A disordered region spans residues 1-140 (MEDEERQRKL…SSEQGAQSSQ (140 aa)). Polar residues-rich tracts occupy residues 50–65 (HTDQ…SSQR) and 92–108 (EIST…NGCN). Residues 115-124 (KPTDPLREEE) show a composition bias toward basic and acidic residues. The residue at position 139 (Ser139) is a Phosphoserine. 2 coiled-coil regions span residues 140-607 (QTCL…LRTQ) and 640-976 (IHYK…LLAN). At Ser1288 the chain carries Phosphoserine. Disordered stretches follow at residues 1643–1668 (STQT…LERS), 2323–2343 (VVST…EESF), and 2419–2454 (SDNL…ASRT). Composition is skewed to basic and acidic residues over residues 1648–1668 (DGHD…LERS) and 2328–2343 (QQRE…EESF). Positions 1808 to 2377 (SRLQAAVEKL…MTHMNNVLKE (570 aa)) form a coiled coil. The segment covering 2438 to 2454 (KQTSLTRLQESPEASRT) has biased composition (polar residues). A PKA-RII subunit binding domain region spans residues 2498–2510 (DLQRSLEKFAAAL). 2 disordered regions span residues 2604-2695 (LEEA…SSSG) and 3271-3296 (MEKD…QKKM). Over residues 2606 to 2615 (EAEERPEEGG) the composition is skewed to acidic residues. A compositionally biased stretch (basic and acidic residues) spans 2642–2669 (PLTEAKEKLSYSLEKEKRTGEQESREAP). The stretch at 2975 to 3325 (LQKADRRSLL…QVYKLDLEGK (351 aa)) forms a coiled coil. The span at 3279–3294 (QKTLQTEQEANTQGQK) shows a compositional bias: polar residues. Residues Ser3732, Ser3755, and Ser3787 each carry the phosphoserine modification.

As to quaternary structure, interacts with the regulatory region of protein kinase N (PKN), protein phosphatase 2A (PP2A), protein phosphatase 1 (PP1) and the immature non-phosphorylated form of PKC epsilon. Interacts with CIP4 and FNBP1. Interacts with chloride intracellular channel proteins CLIC1, CLIC4 and CLIC5. CSNK1D binding promotes its centrosomal subcellular location. Interacts with GM130/GOLGA2; leading to recruitment to the Golgi apparatus. Interacts with KCNQ1; targets protein kinase A (PKA) catalytic and regulatory subunits and protein phosphatase 1 (PP1), to the heterodimer KCNQ1-KCNE1. Interacts with PDE4DIP isoform 2; this interaction stabilizes both proteins. In complex with PDE4DIP isoform 2, recruits CAMSAP2 to the Golgi apparatus. Forms a pericentrosomal complex with CDK5RAP2, EB1/MAPRE1 and PDE4DIP isoform 2; within this complex, MAPRE1 binding to CDK5RAP2 may be mediated by PDE4DIP. Interacts with MAPRE1 and MAPRE3. Interacts (via C-terminus) with CAMSAP2; this interaction is much stronger in the presence of PDE4DIP isoform 2. Interacts with CAMSAP3. Interacts (via C-terminus) with the gamma-tubulin ring complex (gamma-TuRC), composed of gamma-tubulin, TUBGCP2, TUBGCP3, TUBGCP4, TUBGCP5 and TUBGCP6.

Its subcellular location is the golgi apparatus. It is found in the cytoplasm. The protein localises to the cytoskeleton. It localises to the microtubule organizing center. The protein resides in the centrosome. Scaffolding protein that assembles several protein kinases and phosphatases on the centrosome and Golgi apparatus. Required to maintain the integrity of the Golgi apparatus. Required for microtubule nucleation at the cis-side of the Golgi apparatus. Required for association of the centrosomes with the poles of the bipolar mitotic spindle during metaphase. In complex with PDE4DIP isoform 2/MMG8/SMYLE, recruits CAMSAP2 to the Golgi apparatus and tethers non-centrosomal minus-end microtubules to the Golgi, an important step for polarized cell movement. In complex with PDE4DIP isoform 2, EB1/MAPRE1 and CDK5RAP2, contributes to microtubules nucleation and extension also from the centrosome to the cell periphery. This chain is A-kinase anchor protein 9 (Akap9), found in Mus musculus (Mouse).